The primary structure comprises 315 residues: Mitochondrial outer membrane import complex protein METAXIN (315 aa).

Methionine 1 is subject to N-acetylmethionine. The stretch at 157–181 (ENAEQREKQIYKRASEAYEALSTRL) forms a coiled coil. Residues 195–215 (LDAFLLSHILFIIQALPVTSV) traverse the membrane as a helical segment. The disordered stretch occupies residues 240–277 (ASSSSPSPPLHSFPSSFPRKSSKPKSKPKVEKTEEEKK). The span at 267-277 (PKVEKTEEEKK) shows a compositional bias: basic and acidic residues. A helical membrane pass occupies residues 284 to 304 (FFLAAQFLAVVIYVSVMGGGS).

The protein belongs to the metaxin family. Part of a high molecular weight complex that is distinct from the TOM complex. Interacts with a variety of mitochondrial precursor proteins. As to expression, expressed in roots, young cotyledons, flowers and leaves.

It localises to the mitochondrion inner membrane. The protein resides in the mitochondrion outer membrane. In terms of biological role, involved in transport of proteins into the mitochondrion. This chain is Mitochondrial outer membrane import complex protein METAXIN (MTX1), found in Arabidopsis thaliana (Mouse-ear cress).